Reading from the N-terminus, the 948-residue chain is Bifunctional glutamine synthetase adenylyltransferase/adenylyl-removing enzyme (948 aa).

Positions 1–447 (MLTPDNKLMS…EFQQVVGAES (447 aa)) are adenylyl removase. The interval 453–948 (EQGLQVLWQD…NCWNHLLEDD (496 aa)) is adenylyl transferase.

It belongs to the GlnE family. Requires Mg(2+) as cofactor.

It catalyses the reaction [glutamine synthetase]-O(4)-(5'-adenylyl)-L-tyrosine + phosphate = [glutamine synthetase]-L-tyrosine + ADP. The enzyme catalyses [glutamine synthetase]-L-tyrosine + ATP = [glutamine synthetase]-O(4)-(5'-adenylyl)-L-tyrosine + diphosphate. Involved in the regulation of glutamine synthetase GlnA, a key enzyme in the process to assimilate ammonia. When cellular nitrogen levels are high, the C-terminal adenylyl transferase (AT) inactivates GlnA by covalent transfer of an adenylyl group from ATP to specific tyrosine residue of GlnA, thus reducing its activity. Conversely, when nitrogen levels are low, the N-terminal adenylyl removase (AR) activates GlnA by removing the adenylyl group by phosphorolysis, increasing its activity. The regulatory region of GlnE binds the signal transduction protein PII (GlnB) which indicates the nitrogen status of the cell. The protein is Bifunctional glutamine synthetase adenylyltransferase/adenylyl-removing enzyme of Idiomarina loihiensis (strain ATCC BAA-735 / DSM 15497 / L2-TR).